The sequence spans 636 residues: 1-deoxy-D-xylulose-5-phosphate synthase (636 aa).

Residues histidine 74 and 115–117 (AHS) each bind thiamine diphosphate. Aspartate 146 is a binding site for Mg(2+). Residues 147–148 (GS), asparagine 176, tyrosine 287, and glutamate 369 each bind thiamine diphosphate. Asparagine 176 contacts Mg(2+).

Belongs to the transketolase family. DXPS subfamily. In terms of assembly, homodimer. The cofactor is Mg(2+). It depends on thiamine diphosphate as a cofactor.

It catalyses the reaction D-glyceraldehyde 3-phosphate + pyruvate + H(+) = 1-deoxy-D-xylulose 5-phosphate + CO2. The protein operates within metabolic intermediate biosynthesis; 1-deoxy-D-xylulose 5-phosphate biosynthesis; 1-deoxy-D-xylulose 5-phosphate from D-glyceraldehyde 3-phosphate and pyruvate: step 1/1. In terms of biological role, catalyzes the acyloin condensation reaction between C atoms 2 and 3 of pyruvate and glyceraldehyde 3-phosphate to yield 1-deoxy-D-xylulose-5-phosphate (DXP). The polypeptide is 1-deoxy-D-xylulose-5-phosphate synthase (Polaromonas naphthalenivorans (strain CJ2)).